The following is a 229-amino-acid chain: Peptidase E (229 aa).

Residues S120, D135, and H157 each act as charge relay system in the active site.

The protein belongs to the peptidase S51 family.

The protein resides in the cytoplasm. It catalyses the reaction Dipeptidase E catalyzes the hydrolysis of dipeptides Asp-|-Xaa. It does not act on peptides with N-terminal Glu, Asn or Gln, nor does it cleave isoaspartyl peptides.. Functionally, hydrolyzes dipeptides containing N-terminal aspartate residues. May play a role in allowing the cell to use peptide aspartate to spare carbon otherwise required for the synthesis of the aspartate family of amino acids. The sequence is that of Peptidase E from Salmonella typhi.